The following is a 558-amino-acid chain: Putative F-box/LRR-repeat protein R542 (558 aa).

The region spanning 1–47 is the F-box domain; the sequence is MLLNLPYEILLIIFSLIESKKFFKLLSINKEVREFILTMLNQNPKSF. LRR repeat units lie at residues 73–105, 139–176, 177–220, 251–284, 285–317, 329–361, 369–395, 420–444, 445–477, and 481–508; these read KSTI…GLSF, CGKI…NLQC, CMRI…KIDG, LDKL…DLSG, CINL…GLSY, CFRI…GFFY, VVGY…TISD, CNNI…DLRY, CNNI…GISY, and SKKI…VFKT.

This is Putative F-box/LRR-repeat protein R542 from Acanthamoeba polyphaga mimivirus (APMV).